A 96-amino-acid chain; its full sequence is Cytochrome oxidase assembly factor 4 (96 aa).

The CHCH domain maps to 36–77 (KTGCYVENLALQLCHAETGDWRQCFNEMALFRKCWEKNGNRE). 2 short sequence motifs (cx9C motif) span residues 39-49 (CYVENLALQLC) and 59-69 (CFNEMALFRKC). Disulfide bonds link cysteine 39/cysteine 69 and cysteine 49/cysteine 59.

The protein belongs to the COA4 family.

The protein resides in the mitochondrion inner membrane. It is found in the mitochondrion intermembrane space. Involved in cytochrome c oxidase assembly or stability. The sequence is that of Cytochrome oxidase assembly factor 4 (COA4) from Saccharomyces cerevisiae (strain ATCC 204508 / S288c) (Baker's yeast).